The chain runs to 347 residues: Circulating cathodic antigen (347 aa).

Residues 76-109 (ICLAAENKQLEQLKIENKTLRNSLDEHQTALDMI) adopt a coiled-coil conformation. Residues 149–177 (PGPKSVNTPSTNSIDSQSVSQKSNSGKVD) form a disordered region. The segment covering 153–174 (SVNTPSTNSIDSQSVSQKSNSG) has biased composition (polar residues). Residues 206-233 (DAYATELEEELHRLRSENAGLREILMIS) adopt a coiled-coil conformation. The interval 303–332 (LYNIPNPSDDSSNSGTISGNHSDEDSDEDD) is disordered. Residues 307–316 (PNPSDDSSNS) show a composition bias toward low complexity.

Belongs to the SIKE family. Post-translationally, O-glycosylated.

Functionally, involved in protection of the schistosome gut. The protein is Circulating cathodic antigen of Schistosoma mansoni (Blood fluke).